The sequence spans 105 residues: Large ribosomal subunit protein uL24 (105 aa).

It belongs to the universal ribosomal protein uL24 family. As to quaternary structure, part of the 50S ribosomal subunit.

Its function is as follows. One of two assembly initiator proteins, it binds directly to the 5'-end of the 23S rRNA, where it nucleates assembly of the 50S subunit. One of the proteins that surrounds the polypeptide exit tunnel on the outside of the subunit. The chain is Large ribosomal subunit protein uL24 from Wolbachia pipientis wMel.